A 158-amino-acid polypeptide reads, in one-letter code: SsrA-binding protein (158 aa).

The interval 133–158 is disordered; the sequence is KIHDKRETEAKRDWNRQKQRLLKDNA. Residues 136–158 are compositionally biased toward basic and acidic residues; it reads DKRETEAKRDWNRQKQRLLKDNA.

This sequence belongs to the SmpB family.

Its subcellular location is the cytoplasm. Required for rescue of stalled ribosomes mediated by trans-translation. Binds to transfer-messenger RNA (tmRNA), required for stable association of tmRNA with ribosomes. tmRNA and SmpB together mimic tRNA shape, replacing the anticodon stem-loop with SmpB. tmRNA is encoded by the ssrA gene; the 2 termini fold to resemble tRNA(Ala) and it encodes a 'tag peptide', a short internal open reading frame. During trans-translation Ala-aminoacylated tmRNA acts like a tRNA, entering the A-site of stalled ribosomes, displacing the stalled mRNA. The ribosome then switches to translate the ORF on the tmRNA; the nascent peptide is terminated with the 'tag peptide' encoded by the tmRNA and targeted for degradation. The ribosome is freed to recommence translation, which seems to be the essential function of trans-translation. In Ruegeria pomeroyi (strain ATCC 700808 / DSM 15171 / DSS-3) (Silicibacter pomeroyi), this protein is SsrA-binding protein.